A 339-amino-acid chain; its full sequence is MTIQKNWQELIRPNKLQVTPGSDSGRFATLVAEPLERGFGQTLGNALRRVLLSSLQGAAVQSVHIDGVLHEFSSIAGVREDVTDIVLNIKDISIKMQGEGPKRMVVKKQGPGTVTAGDIQTVGDIVVLNPDLQICTLDDGAEIRMEFTVNTGKGYVAAERNRPEDAPIGLIPVDSLFSPVRKVSYKVENTREGQILDYDKLTMTIETNGAITPDDAVAYAARILQDQLNVFVNFEEPRKEVTQEIIPDLAFNPAFLKKVDELELSVRSANCLKNDNIVYIGDLVQKSEAEMLRTPNFGRKSLNEIKEVLAQMGLHLGMEVPGWPPENIDELAKRFEDHY.

An alpha N-terminal domain (alpha-NTD) region spans residues 1–235 (MTIQKNWQEL…DQLNVFVNFE (235 aa)). The alpha C-terminal domain (alpha-CTD) stretch occupies residues 251-339 (FNPAFLKKVD…ELAKRFEDHY (89 aa)).

The protein belongs to the RNA polymerase alpha chain family. As to quaternary structure, homodimer. The RNAP catalytic core consists of 2 alpha, 1 beta, 1 beta' and 1 omega subunit. When a sigma factor is associated with the core the holoenzyme is formed, which can initiate transcription.

The enzyme catalyses RNA(n) + a ribonucleoside 5'-triphosphate = RNA(n+1) + diphosphate. DNA-dependent RNA polymerase catalyzes the transcription of DNA into RNA using the four ribonucleoside triphosphates as substrates. This chain is DNA-directed RNA polymerase subunit alpha, found in Rhodopseudomonas palustris (strain BisA53).